We begin with the raw amino-acid sequence, 354 residues long: Replication factor C subunit 5 (354 aa).

ATP is bound by residues Val5, Ser17, 43 to 51 (GPNGTGKKT), and Arg231.

It belongs to the activator 1 small subunits family. As to quaternary structure, replication factor C (RFC) is a heteropentamer of subunits RFC1, RFC2, RFC3, RFC4 and RFC5 and forms a complex with POL30/PCNA in the presence of ATP. Component of the RAD24-RFC complex which consists of RAD24, RFC2, RFC3, RFC4 and RFC5 and associates with the checkpoint clamp DDC1:MEC3:RAD17 complex. Component of the ELG1-RFC complex which consists of ELG1, RFC2, RFC3, RFC4 and RFC5. Component of the CTF18-RFC complex, which consists of CTF18, CTF8, DCC1, RFC2, RFC3, RFC4 and RFC5. RFC5 interacts with ECO1.

Its subcellular location is the nucleus. Functionally, component of ATP-dependent clamp loader (RFC and RFC-like) complexes for DNA clamps, such as the POL30/PCNA homotrimer and the checkpoint clamp DDC1:MEC3:RAD17 complex. During a clamp loading circle, the RFC:clamp complex binds to DNA and the recognition of the double-stranded/single-stranded junction stimulates ATP hydrolysis by RFC. The complex presumably provides bipartite ATP sites in which one subunit supplies a catalytic site for hydrolysis of ATP bound to the neighboring subunit. Dissociation of RFC from the clamp leaves the clamp encircling DNA. Component of the replication factor C (RFC or activator 1) complex which loads POL30/PCNA and acts during elongation of primed DNA templates by DNA polymerase delta and epsilon. RFC has an essential but redundant activity in sister chromatid cohesion establishment. Component of the RFC-like complex CTF18-RFC which is required for efficient establishment of chromosome cohesion during S-phase and may load or unload POL30/PCNA. Component of the RFC-like RAD24-RFC complex which loads the checkpoint clamp DDC1:MEC3:RAD17 complex and is involved in DNA repair pathways. Component of the RFC-like ELG1-RFC complex which appears to have a role in DNA replication, replication fork re-start, recombination and repair. The polypeptide is Replication factor C subunit 5 (RFC5) (Saccharomyces cerevisiae (strain ATCC 204508 / S288c) (Baker's yeast)).